A 187-amino-acid chain; its full sequence is Probable chemoreceptor glutamine deamidase CheD 1 (187 aa).

The protein belongs to the CheD family.

It carries out the reaction L-glutaminyl-[protein] + H2O = L-glutamyl-[protein] + NH4(+). Probably deamidates glutamine residues to glutamate on methyl-accepting chemotaxis receptors (MCPs), playing an important role in chemotaxis. The chain is Probable chemoreceptor glutamine deamidase CheD 1 from Ruegeria sp. (strain TM1040) (Silicibacter sp.).